Reading from the N-terminus, the 398-residue chain is 1-deoxy-D-xylulose 5-phosphate reductoisomerase (398 aa).

Thr-10, Gly-11, Ser-12, Ile-13, Lys-37, Asn-38, and Asn-124 together coordinate NADPH. Lys-125 is a binding site for 1-deoxy-D-xylulose 5-phosphate. Glu-126 contributes to the NADPH binding site. Mn(2+) is bound at residue Asp-150. 1-deoxy-D-xylulose 5-phosphate-binding residues include Ser-151, Glu-152, Ser-186, and His-209. Glu-152 provides a ligand contact to Mn(2+). Residue Gly-215 coordinates NADPH. Positions 222, 227, 228, and 231 each coordinate 1-deoxy-D-xylulose 5-phosphate. Glu-231 contributes to the Mn(2+) binding site.

The protein belongs to the DXR family. Homodimer. The cofactor is Mg(2+). It depends on Mn(2+) as a cofactor.

It carries out the reaction 2-C-methyl-D-erythritol 4-phosphate + NADP(+) = 1-deoxy-D-xylulose 5-phosphate + NADPH + H(+). Its pathway is isoprenoid biosynthesis; isopentenyl diphosphate biosynthesis via DXP pathway; isopentenyl diphosphate from 1-deoxy-D-xylulose 5-phosphate: step 1/6. In terms of biological role, catalyzes the NADPH-dependent rearrangement and reduction of 1-deoxy-D-xylulose-5-phosphate (DXP) to 2-C-methyl-D-erythritol 4-phosphate (MEP). The protein is 1-deoxy-D-xylulose 5-phosphate reductoisomerase of Buchnera aphidicola subsp. Acyrthosiphon pisum (strain 5A).